Reading from the N-terminus, the 192-residue chain is Large ribosomal subunit protein uL3 (192 aa).

Belongs to the universal ribosomal protein uL3 family. As to quaternary structure, part of the 50S ribosomal subunit. Forms a cluster with proteins L14 and L19.

In terms of biological role, one of the primary rRNA binding proteins, it binds directly near the 3'-end of the 23S rRNA, where it nucleates assembly of the 50S subunit. This chain is Large ribosomal subunit protein uL3 (rplC), found in Helicobacter hepaticus (strain ATCC 51449 / 3B1).